The primary structure comprises 506 residues: 2-isopropylmalate synthase (506 aa).

A Pyruvate carboxyltransferase domain is found at 4–266 (ILFMDTTLRD…EPSMTLKEIK (263 aa)). Mn(2+)-binding residues include aspartate 13, histidine 201, histidine 203, and asparagine 237. The tract at residues 390–506 (NITQLQVHFV…KLKSFIQLVK (117 aa)) is regulatory domain.

This sequence belongs to the alpha-IPM synthase/homocitrate synthase family. LeuA type 1 subfamily. As to quaternary structure, homodimer. Mn(2+) serves as cofactor.

Its subcellular location is the cytoplasm. It carries out the reaction 3-methyl-2-oxobutanoate + acetyl-CoA + H2O = (2S)-2-isopropylmalate + CoA + H(+). Its pathway is amino-acid biosynthesis; L-leucine biosynthesis; L-leucine from 3-methyl-2-oxobutanoate: step 1/4. Functionally, catalyzes the condensation of the acetyl group of acetyl-CoA with 3-methyl-2-oxobutanoate (2-ketoisovalerate) to form 3-carboxy-3-hydroxy-4-methylpentanoate (2-isopropylmalate). The protein is 2-isopropylmalate synthase of Bacillus cereus (strain ZK / E33L).